Consider the following 603-residue polypeptide: Laccase 1 (603 aa).

An N-terminal signal peptide occupies residues 1–20 (MSRFARLLLIVALFFTNAWA). 2 consecutive Plastocyanin-like domains span residues 66 to 108 (QRPI…IHIR) and 159 to 349 (LVVS…MRIP). Residues H90 and H92 each coordinate Cu cation. Residues N246, N269, N434, and N474 are each glycosylated (N-linked (GlcNAc...) asparagine). The 129-residue stretch at 460 to 588 (TRDTENDGLV…GGMGIAILDG (129 aa)) folds into the Plastocyanin-like 3 domain. Residues H496, H499, and H501 each coordinate Cu cation. N516 carries an N-linked (GlcNAc...) asparagine glycan. Positions 570, 571, 572, and 576 each coordinate Cu cation.

This sequence belongs to the multicopper oxidase family. Cu cation is required as a cofactor.

The protein resides in the cell surface. Its pathway is pigment biosynthesis. Its function is as follows. Laccase; part of the Pks1 gene cluster that mediates the biosynthesis of an anthraquinone derivative pigment that contributes to conidial pigmentation that provides protection from UV radiation, heat and cold stress. The polyketide synthase Pks1 produces 1-acetyl-2,4,6,8-tetrahydroxy-9,10-anthraquinone though condensation of acetyl-CoA with malonyl-CoA. The dehydratase EthD and the laccase Mlac1 further convert the anthraquinone derivative into the final conidial pigment. The polypeptide is Laccase 1 (Metarhizium anisopliae (Entomophthora anisopliae)).